Here is a 356-residue protein sequence, read N- to C-terminus: UDP-N-acetylglucosamine--N-acetylmuramyl-(pentapeptide) pyrophosphoryl-undecaprenol N-acetylglucosamine transferase (356 aa).

Residues T12–G14, N124, R163, S188, I242, A261–E266, and Q287 each bind UDP-N-acetyl-alpha-D-glucosamine.

The protein belongs to the glycosyltransferase 28 family. MurG subfamily.

The protein resides in the cell inner membrane. It carries out the reaction di-trans,octa-cis-undecaprenyl diphospho-N-acetyl-alpha-D-muramoyl-L-alanyl-D-glutamyl-meso-2,6-diaminopimeloyl-D-alanyl-D-alanine + UDP-N-acetyl-alpha-D-glucosamine = di-trans,octa-cis-undecaprenyl diphospho-[N-acetyl-alpha-D-glucosaminyl-(1-&gt;4)]-N-acetyl-alpha-D-muramoyl-L-alanyl-D-glutamyl-meso-2,6-diaminopimeloyl-D-alanyl-D-alanine + UDP + H(+). It functions in the pathway cell wall biogenesis; peptidoglycan biosynthesis. Cell wall formation. Catalyzes the transfer of a GlcNAc subunit on undecaprenyl-pyrophosphoryl-MurNAc-pentapeptide (lipid intermediate I) to form undecaprenyl-pyrophosphoryl-MurNAc-(pentapeptide)GlcNAc (lipid intermediate II). This is UDP-N-acetylglucosamine--N-acetylmuramyl-(pentapeptide) pyrophosphoryl-undecaprenol N-acetylglucosamine transferase from Stutzerimonas stutzeri (strain A1501) (Pseudomonas stutzeri).